Consider the following 260-residue polypeptide: Putative hydro-lyase Bmul_5125/BMULJ_03391 (260 aa).

This sequence belongs to the D-glutamate cyclase family.

This Burkholderia multivorans (strain ATCC 17616 / 249) protein is Putative hydro-lyase Bmul_5125/BMULJ_03391.